Here is a 511-residue protein sequence, read N- to C-terminus: MKTKHYWVISLLAVLAVGPGLMSNTALSSVQGLVQKTVGTSVFTSVNPILIGNMAFALLVPAGPLLRKKFGARPVYLASLPVFILGSLLIACSGDIALMAAGRFLQGAATGVMLMIMIPMLVLSFPIERRNYALLVLIGGFYGSVIIGTILGTIATSCGHWRWLFFIFGTLSLIGVAVSYFFLHDEHHGAADQEQPLDRAGILLSVFLAAASAVSFIFLQKWGLSSGYVWIGFGVTLCLLIGLLIVEYKVKNPFISIKLMLLPKPVLGLLIIAAGTITVAVSLSAFQGLLRQMYDISQEHLILLSLTLLIGVAIAAILSALLYDKVGPGMLGIIGGLILVFVNFQWLHIQDRSSLYMFAALFIMLAAGTGLTVAAGLMGAAMGGPLPDLVKRMTAVQFLRLFVYMGVPILIGFFTKKDAARQSGSVQDSMMTAYHDLFFISFILSVLLVCLSFCMNATGMGHKLAHKPHDKAKTAPEKPAVSAQGLSKATVKSYKVINDTEYRNALRNLQK.

14 helical membrane passes run 7-27 (WVIS…NTAL), 46-66 (VNPI…GPLL), 80-100 (LPVF…ALMA), 107-127 (GAAT…SFPI), 134-154 (LLVL…LGTI), 163-183 (WLFF…YFFL), 200-220 (AGIL…IFLQ), 226-246 (SGYV…LLIV), 266-286 (VLGL…LSAF), 301-321 (LILL…LSAL), 329-349 (GMLG…WLHI), 357-377 (MFAA…AAGL), 394-414 (TAVQ…IGFF), and 437-457 (LFFI…CMNA). The interval 465 to 486 (AHKPHDKAKTAPEKPAVSAQGL) is disordered.

This sequence belongs to the major facilitator superfamily.

The protein resides in the cell membrane. This is an uncharacterized protein from Bacillus subtilis (strain 168).